The sequence spans 418 residues: Glucose-1-phosphate adenylyltransferase (418 aa).

Residues Y104, G169, 184–185 (EK), and S202 contribute to the alpha-D-glucose 1-phosphate site.

Belongs to the bacterial/plant glucose-1-phosphate adenylyltransferase family. As to quaternary structure, homotetramer.

The catalysed reaction is alpha-D-glucose 1-phosphate + ATP + H(+) = ADP-alpha-D-glucose + diphosphate. It functions in the pathway glycan biosynthesis; glycogen biosynthesis. Its function is as follows. Involved in the biosynthesis of ADP-glucose, a building block required for the elongation reactions to produce glycogen. Catalyzes the reaction between ATP and alpha-D-glucose 1-phosphate (G1P) to produce pyrophosphate and ADP-Glc. This is Glucose-1-phosphate adenylyltransferase from Jannaschia sp. (strain CCS1).